Reading from the N-terminus, the 234-residue chain is Triosephosphate isomerase (234 aa).

A substrate-binding site is contributed by 8 to 10; the sequence is NFK. The active-site Electrophile is the H90. The active-site Proton acceptor is the E159. Residues G165 and S197 each contribute to the substrate site.

It belongs to the triosephosphate isomerase family. As to quaternary structure, homodimer.

The protein localises to the cytoplasm. The catalysed reaction is D-glyceraldehyde 3-phosphate = dihydroxyacetone phosphate. Its pathway is carbohydrate biosynthesis; gluconeogenesis. It functions in the pathway carbohydrate degradation; glycolysis; D-glyceraldehyde 3-phosphate from glycerone phosphate: step 1/1. Involved in the gluconeogenesis. Catalyzes stereospecifically the conversion of dihydroxyacetone phosphate (DHAP) to D-glyceraldehyde-3-phosphate (G3P). The sequence is that of Triosephosphate isomerase from Helicobacter pylori (strain Shi470).